A 216-amino-acid chain; its full sequence is Small ribosomal subunit protein uS3c (216 aa).

Residues 39–109 form the KH type-2 domain; the sequence is IRSYINRELE…SIRINVIELT (71 aa).

It belongs to the universal ribosomal protein uS3 family. As to quaternary structure, part of the 30S ribosomal subunit.

It is found in the plastid. The protein localises to the chloroplast. In Guillardia theta (Cryptophyte), this protein is Small ribosomal subunit protein uS3c (rps3).